The following is a 751-amino-acid chain: Catalase-peroxidase (751 aa).

The disordered stretch occupies residues 1 to 21 (MSNESKCPFHQTAGGGTTNRD). The tryptophyl-tyrosyl-methioninium (Trp-Tyr) (with M-270) cross-link spans 90 to 244 (WHSAGTYRIG…LAAVQMGLIY (155 aa)). Histidine 91 functions as the Proton acceptor in the catalytic mechanism. A disordered region spans residues 195–227 (YGKDQVKAQPPGQGDLVAEPAKHGEEQNRDLSA). Positions 214 to 227 (PAKHGEEQNRDLSA) are enriched in basic and acidic residues. Positions 244 to 270 (YVNPEGPEGNPDPVASGKDIRETFGRM) form a cross-link, tryptophyl-tyrosyl-methioninium (Tyr-Met) (with W-90). Histidine 285 contacts heme b. The tract at residues 364-385 (GAHQWRPKDGKGAGTVPDAHDP) is disordered.

This sequence belongs to the peroxidase family. Peroxidase/catalase subfamily. Homodimer or homotetramer. It depends on heme b as a cofactor. Post-translationally, formation of the three residue Trp-Tyr-Met cross-link is important for the catalase, but not the peroxidase activity of the enzyme.

The catalysed reaction is H2O2 + AH2 = A + 2 H2O. It catalyses the reaction 2 H2O2 = O2 + 2 H2O. In terms of biological role, bifunctional enzyme with both catalase and broad-spectrum peroxidase activity. The protein is Catalase-peroxidase of Pseudomonas putida (strain ATCC 47054 / DSM 6125 / CFBP 8728 / NCIMB 11950 / KT2440).